Here is a 389-residue protein sequence, read N- to C-terminus: UDP-N-acetylglucosamine--N-acetylmuramyl-(pentapeptide) pyrophosphoryl-undecaprenol N-acetylglucosamine transferase (389 aa).

Residues T39–G41, N157, R193, S221, I275, A294–E299, and Q320 contribute to the UDP-N-acetyl-alpha-D-glucosamine site.

It belongs to the glycosyltransferase 28 family. MurG subfamily.

Its subcellular location is the cell inner membrane. It catalyses the reaction di-trans,octa-cis-undecaprenyl diphospho-N-acetyl-alpha-D-muramoyl-L-alanyl-D-glutamyl-meso-2,6-diaminopimeloyl-D-alanyl-D-alanine + UDP-N-acetyl-alpha-D-glucosamine = di-trans,octa-cis-undecaprenyl diphospho-[N-acetyl-alpha-D-glucosaminyl-(1-&gt;4)]-N-acetyl-alpha-D-muramoyl-L-alanyl-D-glutamyl-meso-2,6-diaminopimeloyl-D-alanyl-D-alanine + UDP + H(+). Its pathway is cell wall biogenesis; peptidoglycan biosynthesis. In terms of biological role, cell wall formation. Catalyzes the transfer of a GlcNAc subunit on undecaprenyl-pyrophosphoryl-MurNAc-pentapeptide (lipid intermediate I) to form undecaprenyl-pyrophosphoryl-MurNAc-(pentapeptide)GlcNAc (lipid intermediate II). The protein is UDP-N-acetylglucosamine--N-acetylmuramyl-(pentapeptide) pyrophosphoryl-undecaprenol N-acetylglucosamine transferase of Saccharophagus degradans (strain 2-40 / ATCC 43961 / DSM 17024).